Here is a 264-residue protein sequence, read N- to C-terminus: tRNA (guanine-N(1)-)-methyltransferase (264 aa).

S-adenosyl-L-methionine-binding positions include G125 and L145–L150.

Belongs to the RNA methyltransferase TrmD family. Homodimer.

The protein resides in the cytoplasm. The catalysed reaction is guanosine(37) in tRNA + S-adenosyl-L-methionine = N(1)-methylguanosine(37) in tRNA + S-adenosyl-L-homocysteine + H(+). Functionally, specifically methylates guanosine-37 in various tRNAs. This Burkholderia mallei (strain NCTC 10247) protein is tRNA (guanine-N(1)-)-methyltransferase.